A 687-amino-acid polypeptide reads, in one-letter code: Putative metabolite transport protein YDL199C (687 aa).

The segment at 1–22 (MKPPLNMSRSNKPLTQEANSSA) is disordered. Over 1 to 122 (MKPPLNMSRS…RHSSRVLRTS (122 aa)) the chain is Extracellular. Residues 7–22 (MSRSNKPLTQEANSSA) are compositionally biased toward polar residues. Ser90 is subject to Phosphoserine. Residues 123 to 143 (FISFVVLVSSLSGLDQGLISG) form a helical membrane-spanning segment. The Cytoplasmic portion of the chain corresponds to 144 to 164 (NVMTLSFQKYFHYPLTSPLGN). Residues 165–185 (IVSIVNLGAFMASLFVYSGIL) traverse the membrane as a helical segment. Topologically, residues 186-192 (EPCSRKK) are extracellular. A helical transmembrane segment spans residues 193–213 (MLQISTMIYSLGAIVQVLALN). At 214 to 216 (QWC) the chain is on the cytoplasmic side. Residues 217–237 (LLLGRFLLGVGMGFAFSMVII) form a helical membrane-spanning segment. The Extracellular segment spans residues 238 to 251 (YQFEFPLPCIRKRT). A helical membrane pass occupies residues 252–272 (LISIQCVSSVIAYSFGIWINC). Over 273–283 (AFRYLGFAWRY) the chain is Cytoplasmic. A helical membrane pass occupies residues 284–304 (PLSTHVALGIILNLMSFYLIL). At 305 to 410 (ESPSWLLKQK…MGRGERKSIY (106 aa)) the chain is on the extracellular side. A helical membrane pass occupies residues 411 to 431 (LTGLNALIYSIVILAYVPLVL). Topologically, residues 432–439 (RKRKEKTN) are cytoplasmic. A helical membrane pass occupies residues 440–460 (VLLGSIVMCALLFTISFTDWF). The Extracellular portion of the chain corresponds to 461 to 469 (PKSTTRYIS). Residues 470 to 490 (ILFAVFLFTHFISWDSIGWVM) form a helical membrane-spanning segment. Residues 491-500 (TIELLPHLSQ) are Cytoplasmic-facing. The helical transmembrane segment at 501–521 (APVILLVSNFYWIFKWFVSLI) threads the bilayer. The Extracellular portion of the chain corresponds to 522 to 533 (TPILIDRLSWKF). A helical transmembrane segment spans residues 534–554 (YLIPSLSSFISIIFVLKIFPI). The Cytoplasmic segment spans residues 555–687 (ETRDERLDSD…QNSPGDMAVA (133 aa)). Disordered regions lie at residues 561–587 (LDSDDDSTGNGSGNHDDVFDDTGSEFS) and 654–687 (SFHNRTDPNISDNIAANKPSSGGGQNSPGDMAVA). The span at 660–673 (DPNISDNIAANKPS) shows a compositional bias: polar residues.

It belongs to the major facilitator superfamily. Sugar transporter (TC 2.A.1.1) family.

The protein localises to the membrane. This chain is Putative metabolite transport protein YDL199C, found in Saccharomyces cerevisiae (strain ATCC 204508 / S288c) (Baker's yeast).